The sequence spans 591 residues: Aspartate--tRNA ligase (591 aa).

Residue Glu-171 participates in L-aspartate binding. Positions 195–198 (QLFK) are aspartate. Arg-217 contributes to the L-aspartate binding site. Residues 217-219 (RDE) and Gln-226 contribute to the ATP site. His-448 serves as a coordination point for L-aspartate. Glu-482 serves as a coordination point for ATP. Arg-489 lines the L-aspartate pocket. ATP is bound at residue 534–537 (GLDR).

Belongs to the class-II aminoacyl-tRNA synthetase family. Type 1 subfamily. In terms of assembly, homodimer.

The protein resides in the cytoplasm. The enzyme catalyses tRNA(Asp) + L-aspartate + ATP = L-aspartyl-tRNA(Asp) + AMP + diphosphate. In terms of biological role, catalyzes the attachment of L-aspartate to tRNA(Asp) in a two-step reaction: L-aspartate is first activated by ATP to form Asp-AMP and then transferred to the acceptor end of tRNA(Asp). The polypeptide is Aspartate--tRNA ligase (Aliivibrio fischeri (strain MJ11) (Vibrio fischeri)).